A 409-amino-acid chain; its full sequence is uncharacterized protein (409 aa).

Residues 1–29 form the signal peptide; that stretch reads MARSRCVHRVVHQAACIGVIGLSTSALTT. Cys-30 carries the N-palmitoyl cysteine lipid modification. The S-diacylglycerol cysteine moiety is linked to residue Cys-30.

Belongs to the TP013X lipoprotein family.

The protein resides in the cell membrane. This is an uncharacterized protein from Treponema pallidum (strain Nichols).